Consider the following 54-residue polypeptide: Photosystem II reaction center protein K (54 aa).

Positions 1 to 17 (MSFENFAIITLKENVFA) are excised as a propeptide. Residues 33-53 (LPIIPVLFLLLAFVWQSAVKF) traverse the membrane as a helical segment.

Belongs to the PsbK family. PSII is composed of 1 copy each of membrane proteins PsbA, PsbB, PsbC, PsbD, PsbE, PsbF, PsbH, PsbI, PsbJ, PsbK, PsbL, PsbM, PsbT, PsbY, PsbZ, Psb30/Ycf12, at least 3 peripheral proteins of the oxygen-evolving complex and a large number of cofactors. It forms dimeric complexes.

Its subcellular location is the plastid. It localises to the chloroplast thylakoid membrane. In terms of biological role, one of the components of the core complex of photosystem II (PSII). PSII is a light-driven water:plastoquinone oxidoreductase that uses light energy to abstract electrons from H(2)O, generating O(2) and a proton gradient subsequently used for ATP formation. It consists of a core antenna complex that captures photons, and an electron transfer chain that converts photonic excitation into a charge separation. This Euglena deses protein is Photosystem II reaction center protein K.